The chain runs to 370 residues: Subtilisin-like protease (370 aa).

The N-terminal stretch at 1-17 (MIASIVFFIVLVDGVAT) is a signal peptide. Residues D13, H35, and S190 each act as charge relay system in the active site. One can recognise a Peptidase S8 domain in the interval 18–261 (GSPNALVTDF…FGEVSPSRLE (244 aa)). The region spanning 240 to 370 (RVTDRWTHRN…TTEGTCHGIR (131 aa)) is the P/Homo B domain.

The protein belongs to the peptidase S8 family.

In Ictalurid herpesvirus 1 (strain Auburn) (IcHV-1), this protein is Subtilisin-like protease (ORF47).